We begin with the raw amino-acid sequence, 370 residues long: GTPase Obg (370 aa).

The Obg domain occupies 1–159 (MKFIDEARIE…RMLRLELKVL (159 aa)). The segment at 127 to 146 (NLHFKSSTNRAPRQKTDGKP) is disordered. In terms of domain architecture, OBG-type G spans 160 to 334 (ADVGLLGMPN…LCYAIYDYLA (175 aa)). Residues 166–173 (GMPNAGKS), 191–195 (FTTLA), 213–216 (DIPG), 284–287 (NKLD), and 315–317 (SAL) contribute to the GTP site. Residues Ser173 and Thr193 each contribute to the Mg(2+) site.

Belongs to the TRAFAC class OBG-HflX-like GTPase superfamily. OBG GTPase family. In terms of assembly, monomer. The cofactor is Mg(2+).

The protein resides in the cytoplasm. An essential GTPase which binds GTP, GDP and possibly (p)ppGpp with moderate affinity, with high nucleotide exchange rates and a fairly low GTP hydrolysis rate. Plays a role in control of the cell cycle, stress response, ribosome biogenesis and in those bacteria that undergo differentiation, in morphogenesis control. The sequence is that of GTPase Obg from Burkholderia lata (strain ATCC 17760 / DSM 23089 / LMG 22485 / NCIMB 9086 / R18194 / 383).